A 396-amino-acid polypeptide reads, in one-letter code: Na(+)/H(+) antiporter NhaA 1 (396 aa).

The next 11 membrane-spanning stretches (helical) occupy residues 18–38, 60–80, 95–115, 126–146, 155–175, 178–198, 201–221, 262–282, 295–315, 333–353, and 362–382; these read LLLIGAMLLAVLCANTPLSWL, LLLWINDGLMAIFFLLVGLEV, IALPGIAAVGGMLVPALIYTG, GWAIPAATDIAFALGVIALLG, LFLLTLAILDDLGAIVIIALF, ADLSVLSLVLAMIAVAGLFIL, TGVTHIAAYVLLGVFLWICVL, VAYGILPIFAFANAGVSLAGI, IAAGLFVGKQFGIVVFSWIGV, GMAVLCGIGFTMSLFIATLAL, and AARLGVLLGSLMSALSGYYLL.

Belongs to the NhaA Na(+)/H(+) (TC 2.A.33) antiporter family.

The protein localises to the cell inner membrane. It carries out the reaction Na(+)(in) + 2 H(+)(out) = Na(+)(out) + 2 H(+)(in). Na(+)/H(+) antiporter that extrudes sodium in exchange for external protons. The polypeptide is Na(+)/H(+) antiporter NhaA 1 (Syntrophotalea carbinolica (strain DSM 2380 / NBRC 103641 / GraBd1) (Pelobacter carbinolicus)).